Here is a 197-residue protein sequence, read N- to C-terminus: Phosphoheptose isomerase (197 aa).

Positions 36-197 constitute an SIS domain; it reads MVNALLNEGK…IDSQLFGSEE (162 aa). 51–53 is a substrate binding site; that stretch reads NGG. Zn(2+) is bound by residues H60 and E64. Substrate-binding positions include E64, 93-94, 119-121, S124, and Q174; these read ND and STS. 2 residues coordinate Zn(2+): Q174 and H182.

The protein belongs to the SIS family. GmhA subfamily. Homotetramer. The cofactor is Zn(2+).

The protein localises to the cytoplasm. The enzyme catalyses 2 D-sedoheptulose 7-phosphate = D-glycero-alpha-D-manno-heptose 7-phosphate + D-glycero-beta-D-manno-heptose 7-phosphate. The protein operates within carbohydrate biosynthesis; D-glycero-D-manno-heptose 7-phosphate biosynthesis; D-glycero-alpha-D-manno-heptose 7-phosphate and D-glycero-beta-D-manno-heptose 7-phosphate from sedoheptulose 7-phosphate: step 1/1. In terms of biological role, catalyzes the isomerization of sedoheptulose 7-phosphate in D-glycero-D-manno-heptose 7-phosphate. In Pseudomonas fluorescens (strain SBW25), this protein is Phosphoheptose isomerase.